Here is a 298-residue protein sequence, read N- to C-terminus: Apolipoprotein E (298 aa).

Residues 1-18 form the signal peptide; that stretch reads MKILWAALVLTLLAGCRA. Repeat copies occupy residues 74-95, 96-117, 118-139, 140-161, 162-183, and 223-244. The tract at residues 74–244 is 8 X 22 AA approximate tandem repeats; it reads LLMEDTMKEL…RLEEVREQME (171 aa). At Met137 the chain carries Methionine sulfoxide. Ser141 carries the phosphoserine modification. The LDL and other lipoprotein receptors binding stretch occupies residues 152–162; sequence HLRKLRKRLQR. 156 to 159 provides a ligand contact to heparin; that stretch reads LRKR. Positions 204–272 are lipid-binding and lipoprotein association; that stretch reads ALTSHPLRER…SWFEPMVEDL (69 aa). 218 to 225 contributes to the heparin binding site; it reads GEQVRGRL. A specificity for association with VLDL region spans residues 260–272; the sequence is RLKSWFEPMVEDL.

It belongs to the apolipoprotein A1/A4/E family. Homotetramer. May interact with ABCA1; functionally associated with ABCA1 in the biogenesis of HDLs. May interact with APP/A4 amyloid-beta peptide; the interaction is extremely stable in vitro but its physiological significance is unclear. May interact with MAPT. May interact with MAP2. In the cerebrospinal fluid, interacts with secreted SORL1. Interacts with PMEL; this allows the loading of PMEL luminal fragment on ILVs to induce fibril nucleation. APOE exists as multiple glycosylated and sialylated glycoforms within cells and in plasma. The extent of glycosylation and sialylation are tissue and context specific. In terms of processing, glycated in plasma VLDL. Post-translationally, phosphorylated by FAM20C in the extracellular medium.

Its subcellular location is the secreted. The protein resides in the extracellular space. It localises to the extracellular matrix. The protein localises to the extracellular vesicle. It is found in the endosome. Its subcellular location is the multivesicular body. APOE is an apolipoprotein, a protein associating with lipid particles, that mainly functions in lipoprotein-mediated lipid transport between organs via the plasma and interstitial fluids. APOE is a core component of plasma lipoproteins and is involved in their production, conversion and clearance. Apolipoproteins are amphipathic molecules that interact both with lipids of the lipoprotein particle core and the aqueous environment of the plasma. As such, APOE associates with chylomicrons, chylomicron remnants, very low density lipoproteins (VLDL) and intermediate density lipoproteins (IDL) but shows a preferential binding to high-density lipoproteins (HDL). It also binds a wide range of cellular receptors including the LDL receptor/LDLR, the LDL receptor-related proteins LRP1, LRP2 and LRP8 and the very low-density lipoprotein receptor/VLDLR that mediate the cellular uptake of the APOE-containing lipoprotein particles. Finally, APOE also has a heparin-binding activity and binds heparan-sulfate proteoglycans on the surface of cells, a property that supports the capture and the receptor-mediated uptake of APOE-containing lipoproteins by cells. A main function of APOE is to mediate lipoprotein clearance through the uptake of chylomicrons, VLDLs, and HDLs by hepatocytes. APOE is also involved in the biosynthesis by the liver of VLDLs as well as their uptake by peripheral tissues ensuring the delivery of triglycerides and energy storage in muscle, heart and adipose tissues. By participating in the lipoprotein-mediated distribution of lipids among tissues, APOE plays a critical role in plasma and tissues lipid homeostasis. APOE is also involved in two steps of reverse cholesterol transport, the HDLs-mediated transport of cholesterol from peripheral tissues to the liver, and thereby plays an important role in cholesterol homeostasis. First, it is functionally associated with ABCA1 in the biogenesis of HDLs in tissues. Second, it is enriched in circulating HDLs and mediates their uptake by hepatocytes. APOE also plays an important role in lipid transport in the central nervous system, regulating neuron survival and sprouting. The chain is Apolipoprotein E (APOE) from Hydrochoerus hydrochaeris (Capybara).